The primary structure comprises 389 residues: BTB/POZ domain-containing protein KCTD9 (389 aa).

The KHA domain occupies 3-82 (RVTLFLNGSP…PQTDSKPPEG (80 aa)). Residue serine 11 is modified to Phosphoserine. Residues 89 to 161 (DWLTLNVGGR…LRHGQLIVND (73 aa)) form the BTB domain. Pentapeptide repeat domains follow at residues 224 to 256 (NFSG…ANLC), 258 to 297 (ANLE…NFED), and 338 to 376 (CNLR…AIFE).

In terms of assembly, forms pentamers. Component of a complex composed of 5 subunits of KCTD9 and 5 CUL3.

The protein operates within protein modification; protein ubiquitination. Functionally, substrate-specific adapter of a BCR (BTB-CUL3-RBX1) E3 ubiquitin-protein ligase complex, which mediates the ubiquitination of target proteins, leading to their degradation by the proteasome. This chain is BTB/POZ domain-containing protein KCTD9 (KCTD9), found in Homo sapiens (Human).